The sequence spans 693 residues: IYYTFDSFFCSPRMENGVLGNALEGVHVEEEEGEKTEEESLVENNDNVDEEAREELREQVYDAMGEKEESKKTEGMSLSKPETAKEQESEMEKGGREDMDISEPTEELPEKVALTPDQLTETSEEAEGAAAPEGLNEAEVTSGKSEQEAADAEKGKSVSGTDVQEEHKEQVEEKQGEVIVRIEKPTEASEEQPGTTLGKDNTAVEVEAEPVDATAKPVDVGGHEPKEQMATSGNEPGKAVLNQQLVGQDVPPVEESPMVTTEAAEVGSEVSEKSEQEATVVSNDGAVNGLSAAGDQASVDPQPSAERVTETKGGSELEEVRAELAPSQEAKLPIEESEGAGDGVETKVAQGVTEKSPEDKVKIAANEETQEREEQMKEGEETEGSEEEDKENDKAEEETPNDSVLENKSLPENEEEEIGNLELAWDMLDLAKIIFKRQETKEAQLYAAQAHLKLGEVSVESQNYIQAVEEFQACLSLQEQYLEAHDRLLAETHYQLGLAYGYNSQYDEAVAQFSKSIEVIEKRMAVLNEQMKEAEGSSTEYEKEIEELKELLPEIREKIEDAKESQRSGNVAELALKATLVGSSTSGFTPSGGGSSVSTIASRKPADGASSSNCVTDISHLVRKKRKPEEESPRKDDAKKAKQEPEVNGGSGDAVPSGNEVSENMEEAENQTESRAAMEGTVEAGATVESTAC.

A disordered region spans residues glycine 25–glutamate 415. Positions glutamate 29–serine 40 are histone-binding. The segment covering glutamate 29–arginine 53 has biased composition (acidic residues). Threonine 36 is subject to Phosphothreonine. Residue serine 40 is modified to Phosphoserine. Basic and acidic residues-rich tracts occupy residues glutamate 54 to glutamate 74 and glutamate 82 to methionine 99. Threonine 83 carries the phosphothreonine modification. Residues serine 89 and serine 102 each carry the phosphoserine modification. The histone-binding stretch occupies residues glutamate 124–serine 157. Positions glycine 128 to glutamate 139 are enriched in low complexity. Over residues serine 145–lysine 156 the composition is skewed to basic and acidic residues. An N6-acetyllysine modification is found at lysine 156. At serine 157 the chain carries Phosphoserine. Positions glutamine 164–glutamate 187 are enriched in basic and acidic residues. N6-acetyllysine is present on lysine 199. Phosphoserine is present on residues serine 232, serine 304, serine 315, serine 327, and serine 356. A compositionally biased stretch (basic and acidic residues) spans arginine 307–alanine 322. Phosphothreonine occurs at positions 369 and 382. The tract at residues glutamate 374–isoleucine 418 is histone-binding. Residues glutamate 380–proline 400 are compositionally biased toward acidic residues. Phosphoserine occurs at positions 385, 403, and 409. TPR repeat units follow at residues alanine 448 to tyrosine 481 and alanine 490 to arginine 523. The stretch at valine 510–serine 565 forms a coiled coil. Serine 568 is subject to Phosphoserine. A disordered region spans residues serine 583 to cysteine 693. Threonine 589 carries the phosphothreonine modification. Serine 611 and serine 612 each carry phosphoserine. The Nuclear localization signal signature appears at valine 622 to proline 628. Over residues lysine 627–proline 645 the composition is skewed to basic and acidic residues. The residue at position 632 (serine 632) is a Phosphoserine. Lysine 642 participates in a covalent cross-link: Glycyl lysine isopeptide (Lys-Gly) (interchain with G-Cter in SUMO1). A phosphoserine mark is found at serine 651, serine 657, and serine 662.

It belongs to the NASP family. Binds to linker H1 histones. Interacts with histones H2A, H2B, H3 and H4. Interacts with histone H3.3. Interacts with histones H3 and H4; NASP is a histone chaperone that stabilizes and maintains a soluble pool of histone H3-H4 dimers. Interacts with ASF1A and ASF1B; the interaction is probably indirect and mediated by H3-H4. Also binds to HSP90 in the cytoplasm. This interaction stimulates binding of NASP to H1-6/H1T. Testis- and sperm-specific.

It localises to the cytoplasm. The protein localises to the nucleus. Component of the histone chaperone network. Binds and stabilizes histone H3-H4 not bound to chromatin to maintain a soluble reservoir and modulate degradation by chaperone-mediated autophagy. Required for DNA replication, normal cell cycle progression and cell proliferation. Forms a cytoplasmic complex with HSP90 and H1 linker histones and stimulates HSP90 ATPase activity. NASP and H1 histone are subsequently released from the complex and translocate to the nucleus where the histone is released for binding to DNA. The protein is Nuclear autoantigenic sperm protein (NASP) of Oryctolagus cuniculus (Rabbit).